The sequence spans 426 residues: 3-phosphoshikimate 1-carboxyvinyltransferase (426 aa).

3-phosphoshikimate contacts are provided by K22, S23, and R27. Residue K22 coordinates phosphoenolpyruvate. G96 and R124 together coordinate phosphoenolpyruvate. 3-phosphoshikimate-binding residues include S170, S171, Q172, S198, D314, N337, and K341. Residue Q172 participates in phosphoenolpyruvate binding. Catalysis depends on D314, which acts as the Proton acceptor. Phosphoenolpyruvate-binding residues include R345, R387, and K412.

Belongs to the EPSP synthase family. Monomer.

The protein localises to the cytoplasm. It catalyses the reaction 3-phosphoshikimate + phosphoenolpyruvate = 5-O-(1-carboxyvinyl)-3-phosphoshikimate + phosphate. The protein operates within metabolic intermediate biosynthesis; chorismate biosynthesis; chorismate from D-erythrose 4-phosphate and phosphoenolpyruvate: step 6/7. Functionally, catalyzes the transfer of the enolpyruvyl moiety of phosphoenolpyruvate (PEP) to the 5-hydroxyl of shikimate-3-phosphate (S3P) to produce enolpyruvyl shikimate-3-phosphate and inorganic phosphate. In Shewanella piezotolerans (strain WP3 / JCM 13877), this protein is 3-phosphoshikimate 1-carboxyvinyltransferase.